A 278-amino-acid chain; its full sequence is Large ribosomal subunit protein uL2 (278 aa).

The segment at 211 to 278 (KRWLGKRPQS…LIIRRRKGSK (68 aa)) is disordered. Residues 258–270 (KTRDTKKASEKLI) are compositionally biased toward basic and acidic residues.

The protein belongs to the universal ribosomal protein uL2 family. As to quaternary structure, part of the 50S ribosomal subunit. Forms a bridge to the 30S subunit in the 70S ribosome.

Its function is as follows. One of the primary rRNA binding proteins. Required for association of the 30S and 50S subunits to form the 70S ribosome, for tRNA binding and peptide bond formation. It has been suggested to have peptidyltransferase activity; this is somewhat controversial. Makes several contacts with the 16S rRNA in the 70S ribosome. The polypeptide is Large ribosomal subunit protein uL2 (Lactobacillus helveticus (strain DPC 4571)).